A 669-amino-acid chain; its full sequence is MMDKETAKHRAEELRRTIDQYSYEYYTLDEPSVPDSEYDRLMQELIAIEEEHPELRTPDSPTQRVGGAVLESFQKVQHGTPMLSLGNAFNDDDLRDFDRRVRQAVGDGVAYNVELKIDGLAVSLRYEDGYFVRGATRGDGTTGEDITENLKTIRNIPLKMKRNLSIEVRGEAYMPKQSFEALNEERLKHEEEPFANPRNAAAGSLRQLDPKIAAKRNLDIFVYSIAELDEMGVETQSQGLDFLDELGFKTNQERKKCATIDEVIEMIEELQAKRADLPYEIDGIVIKVDSLDQQEELGYTAKSPRWAIAYKFPAEEVVTKLLDIELNVGRTGVITPTAVLEPVKVAGTTVSRASLHNEDLIKEKDIRILDKVVVKKAGDIIPEVVNVLIEQRTGEEKEFNMPTGCPECESELVRIEGEVALRCINPECPAQIREGLIHFVSRNAMNIDGLGERVITQLFREHLVRNVADLYKLTKEQVIRLERMGEKSTDNLISSIQKSKENSLERLLFGLGIRFIGSKAAKTLAMHFESLENLKQVTEEELLAVDEIGEKMADAVITYFRKEEMLELLNELEELGVNTLYKGPKKVKAEDSDSYFAGKTIVLTGKLEELSRNEAKAQIEALGGKLTGSVSKKTDLLIAGEAAGSKLTKAQELNIEVWNEAQLLGELKK.

NAD(+)-binding positions include 35 to 39, 84 to 85, and Glu114; these read DSEYD and SL. Lys116 (N6-AMP-lysine intermediate) is an active-site residue. NAD(+) contacts are provided by Arg137, Glu171, Lys287, and Lys311. Zn(2+) contacts are provided by Cys405, Cys408, Cys423, and Cys428. In terms of domain architecture, BRCT spans 591–669; the sequence is DSDSYFAGKT…EAQLLGELKK (79 aa).

Belongs to the NAD-dependent DNA ligase family. LigA subfamily. It depends on Mg(2+) as a cofactor. Mn(2+) is required as a cofactor.

The catalysed reaction is NAD(+) + (deoxyribonucleotide)n-3'-hydroxyl + 5'-phospho-(deoxyribonucleotide)m = (deoxyribonucleotide)n+m + AMP + beta-nicotinamide D-nucleotide.. In terms of biological role, DNA ligase that catalyzes the formation of phosphodiester linkages between 5'-phosphoryl and 3'-hydroxyl groups in double-stranded DNA using NAD as a coenzyme and as the energy source for the reaction. It is essential for DNA replication and repair of damaged DNA. This is DNA ligase from Bacillus velezensis (strain DSM 23117 / BGSC 10A6 / LMG 26770 / FZB42) (Bacillus amyloliquefaciens subsp. plantarum).